A 393-amino-acid chain; its full sequence is Elongation factor Tu (393 aa).

In terms of domain architecture, tr-type G spans 10-203 (KPHVNIGTIG…AVDEFIPEPV (194 aa)). The interval 19 to 26 (GHVDHGKT) is G1. Residue 19-26 (GHVDHGKT) coordinates GTP. T26 lines the Mg(2+) pocket. The G2 stretch occupies residues 60 to 64 (GITIS). Residues 81 to 84 (DCPG) form a G3 region. GTP-binding positions include 81–85 (DCPGH) and 136–139 (NKVD). The tract at residues 136–139 (NKVD) is G4. Residues 173–175 (SAL) are G5.

It belongs to the TRAFAC class translation factor GTPase superfamily. Classic translation factor GTPase family. EF-Tu/EF-1A subfamily. As to quaternary structure, monomer.

Its subcellular location is the cytoplasm. It carries out the reaction GTP + H2O = GDP + phosphate + H(+). GTP hydrolase that promotes the GTP-dependent binding of aminoacyl-tRNA to the A-site of ribosomes during protein biosynthesis. The chain is Elongation factor Tu from Chlorobium limicola (strain DSM 245 / NBRC 103803 / 6330).